Here is a 142-residue protein sequence, read N- to C-terminus: Galactose-6-phosphate isomerase subunit LacA (142 aa).

This sequence belongs to the LacAB/RpiB family. As to quaternary structure, heteromultimeric protein consisting of LacA and LacB.

The enzyme catalyses aldehydo-D-galactose 6-phosphate = keto-D-tagatose 6-phosphate. Its pathway is carbohydrate metabolism; D-galactose 6-phosphate degradation; D-tagatose 6-phosphate from D-galactose 6-phosphate: step 1/1. The polypeptide is Galactose-6-phosphate isomerase subunit LacA (Clostridium acetobutylicum (strain ATCC 824 / DSM 792 / JCM 1419 / IAM 19013 / LMG 5710 / NBRC 13948 / NRRL B-527 / VKM B-1787 / 2291 / W)).